Reading from the N-terminus, the 642-residue chain is Voltage-gated potassium channel KCNC2 (642 aa).

The Cytoplasmic portion of the chain corresponds to 1–233 (MGKIESNERV…EDPYSSRAAR (233 aa)). The disordered stretch occupies residues 45-98 (DCLTAAGDKLQPLPPPLSPPPRPPPLSPVPSGCFEGGAGNCSSHGGNGGNGGSD). Residues 56–72 (PLPPPLSPPPRPPPLSP) show a composition bias toward pro residues. Positions 78 to 98 (FEGGAGNCSSHGGNGGNGGSD) are enriched in gly residues. 4 residues coordinate Zn(2+): histidine 128, cysteine 134, cysteine 155, and cysteine 156. A helical membrane pass occupies residues 234–254 (FIAFASLFFILVSITTFCLET). N-linked (GlcNAc...) asparagine glycosylation is found at asparagine 263 and asparagine 270. A helical transmembrane segment spans residues 287 to 307 (TYVEGVCVVWFTFEFLVRIVF). Residues 308–317 (SPNKLEFIKN) are Cytoplasmic-facing. A helical transmembrane segment spans residues 318-338 (LLNIIDFVAILPFYLEVGLSG). Residues 350-372 (FLRVVRFVRILRIFKLTRHFVGL) form a helical; Voltage-sensor membrane-spanning segment. Topologically, residues 373–385 (RVLGHTLRASTNE) are cytoplasmic. The helical transmembrane segment at 386 to 406 (FLLLIIFLALGVLIFATMIYY) threads the bilayer. 4 residues coordinate K(+): threonine 441, leucine 442, glycine 443, and tyrosine 444. The Selectivity filter signature appears at 441-446 (TLGYGD). A helical transmembrane segment spans residues 457–477 (VGALCALAGVLTIAMPVPVIV). The Cytoplasmic segment spans residues 478 to 642 (NNFGMYYSLA…RSRSPIPSIL (165 aa)). Positions 542–576 (SVLSGDDSTGSEPPLSPPERLPIRRSSTRDKNRRG) are disordered. Serine 604 carries the phosphoserine modification.

The protein belongs to the potassium channel family. C (Shaw) (TC 1.A.1.2) subfamily. Kv3.2/KCNC2 sub-subfamily. Homotetramer and heterotetramer with other channel-forming alpha subunits, such as KCNC1. Interacts with KCNC1. Homotetramer or heterotetramer channel activity is regulated by association with modulating ancillary subunits such as KCNE1, KCNE2 and KCNE3, creating a functionally diverse range of channel complexes. Interacts with KCNE1, KCNE2 and KCNE3. Post-translationally, phosphorylated by PKA in cortical synaptosomes. cAMP-dependent phosphorylation inhibits channel activity. Histamine H2 receptor- and PKA-induced phosphorylation extends action potential spike duration, reduces action potential spike amplitude, sustains maximum firing frequency in hippocampal interneurons; also reduces the incidence of high-frequency oscillations in hippocampal CA3 pyramidal cell layers. Weakly expressed in the brain at postnatal age day 7 (P7) and increased at P60. Not detectable in newborn hippocampus. Expressed weakly at P7 in the early developing hippocampus, increasing progressively and reaching a plateau of expression at P14 that is maintained throughout P51. Expressed in paravalbumin- and somatostain-containing inhibitory interneurons of the hippocampus; in the CA1/CA3 stratum oriens-alveus and stratum pyramidale and in cells within the hilus and subgranular layer of the dentate gyrus (DG). Strongly expressed in parvalbumin (PV)-containing fast-spiking GABAergic inhibitor interneurons in deep cortical layers V and VI. Also expressed in non-fast-spiking calbindin (CB)- and/or somatostatin (SOM)-containing interneurons in deep cortical layers V and VI. Expressed in starburst amacrine cells of the retina in the inner nuclear layer (INL) and ganglion cell layer (GCL). Expressed in the suprachiasmatic nucleus (SCN) (at protein level). Expressed in the early developing brain, increasing progressively until P14.

It is found in the cell membrane. The protein localises to the membrane. It localises to the perikaryon. The protein resides in the cell projection. Its subcellular location is the axon. It is found in the dendrite. The protein localises to the postsynaptic cell membrane. It localises to the presynaptic cell membrane. The protein resides in the synapse. Its subcellular location is the synaptosome. It is found in the apical cell membrane. The protein localises to the basolateral cell membrane. It catalyses the reaction K(+)(in) = K(+)(out). With respect to regulation, inhibited by millimolar levels of tetraethylammonium (TEA). Contrary to other channels, inhibited only by millimolar levels of 4-aminopyridine (4-AP). Inhibited by Stichodactyla helianthus peptide ShK. Its function is as follows. Voltage-gated potassium channel that mediates transmembrane potassium transport in excitable membranes, primarily in the brain. Contributes to the regulation of the fast action potential repolarization and in sustained high-frequency firing in neurons of the central nervous system. Homotetramer channels mediate delayed-rectifier voltage-dependent potassium currents that activate rapidly at high-threshold voltages and inactivate slowly. Forms tetrameric channels through which potassium ions pass in accordance with their electrochemical gradient. The channel alternates between opened and closed conformations in response to the voltage difference across the membrane. Can form functional homotetrameric and heterotetrameric channels that contain variable proportions of KCNC1, and possibly other family members as well; channel properties depend on the type of alpha subunits that are part of the channel. Channel properties may be modulated by either the association with ancillary subunits, such as KCNE1, KCNE2 and KCNE3 or indirectly by nitric oxide (NO) through a cGMP- and PKG-mediated signaling cascade, slowing channel activation and deactivation of delayed rectifier potassium channels. Contributes to fire sustained trains of very brief action potentials at high frequency in thalamocortical and suprachiasmatic nucleus (SCN) neurons, in hippocampal and neocortical interneurons and in retinal ganglion cells. Sustained maximal action potential firing frequency in inhibitory hippocampal interneurons is negatively modulated by histamine H2 receptor activation in a cAMP- and protein kinase (PKA) phosphorylation-dependent manner. Plays a role in maintaining the fidelity of synaptic transmission in neocortical GABAergic interneurons by generating action potential (AP) repolarization at nerve terminals, thus reducing spike-evoked calcium influx and GABA neurotransmitter release. Required for long-range synchronization of gamma oscillations over distance in the neocortex. Contributes to the modulation of the circadian rhythm of spontaneous action potential firing in suprachiasmatic nucleus (SCN) neurons in a light-dependent manner. The sequence is that of Voltage-gated potassium channel KCNC2 from Mus musculus (Mouse).